The sequence spans 375 residues: Acyl-coenzyme A diphosphatase NUDT19 (375 aa).

The Nudix hydrolase domain maps to 15 to 263 (AASIVLAAGW…IWLPPPQFYE (249 aa)). Positions 91–116 (LGPAPFSRTAFPSLPDTDDHKTDNTG) are disordered. The Nudix box signature appears at 116 to 137 (GTLPEDVAFRICAVREAFEEAG). 2 residues coordinate Mg(2+): E131 and E135. The Microbody targeting signal signature appears at 373-375 (SHL).

Belongs to the Nudix hydrolase family. In terms of assembly, monomer. Mg(2+) serves as cofactor. Requires Mn(2+) as cofactor.

The protein localises to the peroxisome. It catalyses the reaction an acyl-CoA + H2O = an acyl-4'-phosphopantetheine + adenosine 3',5'-bisphosphate + 2 H(+). It carries out the reaction CoA + H2O = (R)-4'-phosphopantetheine + adenosine 3',5'-bisphosphate + 2 H(+). The enzyme catalyses hexanoyl-CoA + H2O = hexanoyl-4'-phosphopantetheine + adenosine 3',5'-bisphosphate + 2 H(+). The catalysed reaction is octanoyl-CoA + H2O = S-octanoyl-4'-phosphopantetheine + adenosine 3',5'-bisphosphate + 2 H(+). It catalyses the reaction butanoyl-CoA + H2O = S-butanoyl-4'-phosphopantetheine + adenosine 3',5'-bisphosphate + 2 H(+). It carries out the reaction propanoyl-CoA + H2O = propanoyl-4'-phosphopantetheine + adenosine 3',5'-bisphosphate + 2 H(+). The enzyme catalyses malonyl-CoA + H2O = malonyl-4'-phosphopantetheine + adenosine 3',5'-bisphosphate + 2 H(+). The catalysed reaction is succinyl-CoA + H2O = succinyl-4'-phosphopantetheine + adenosine 3',5'-bisphosphate + 2 H(+). It catalyses the reaction choloyl-CoA + H2O = S-choloyl-4'-phosphopantetheine + adenosine 3',5'-bisphosphate + 2 H(+). It carries out the reaction 4,8-dimethylnonanoyl-CoA + H2O = S-(4,8-dimethylnonanoyl)-4'-phosphopantetheine + adenosine 3',5'-bisphosphate + 2 H(+). The enzyme catalyses (9Z,12Z,15Z)-octadecatrienoyl-CoA + H2O = S-(9Z,12Z,15Z-octadecatrienoyl)-4'-phosphopantetheine + adenosine 3',5'-bisphosphate + 2 H(+). The catalysed reaction is (9Z,12Z)-octadecadienoyl-CoA + H2O = S-(9Z,12Z-octadecadienoyl)-4'-phosphopantetheine + adenosine 3',5'-bisphosphate + 2 H(+). It catalyses the reaction (9Z)-hexadecenoyl-CoA + H2O = S-(9Z-hexadecenoyl)-4'-phosphopantetheine + adenosine 3',5'-bisphosphate + 2 H(+). It carries out the reaction (9Z)-tetradecenoyl-CoA + H2O = S-(9Z-tetradecenoyl)-4'-phosphopantetheine + adenosine 3',5'-bisphosphate + 2 H(+). The enzyme catalyses (6Z)-octenoyl-CoA + H2O = S-(6Z-octenoyl)-4'-phosphopantetheine + adenosine 3',5'-bisphosphate + 2 H(+). The catalysed reaction is hexadecanoyl-CoA + H2O = S-hexadecanoyl-4'-phosphopantetheine + adenosine 3',5'-bisphosphate + 2 H(+). It catalyses the reaction tetradecanoyl-CoA + H2O = tetradecanoyl-4'-phosphopantetheine + adenosine 3',5'-bisphosphate + 2 H(+). It carries out the reaction dodecanoyl-CoA + H2O = S-dodecanoyl-4'-phosphopantetheine + adenosine 3',5'-bisphosphate + 2 H(+). The enzyme catalyses a 5'-end CoA-ribonucleoside in mRNA + H2O = a 5'-end phospho-adenosine-phospho-ribonucleoside in mRNA + (R)-4'-phosphopantetheine + 2 H(+). Fatty acyl-coenzyme A (CoA) diphosphatase that hydrolyzes fatty acyl-CoA to yield acyl-4'-phosphopantetheine and adenosine 3',5'-bisphosphate. Mediates the hydrolysis of a wide range of CoA esters, including choloyl-CoA and branched-chain fatty-acyl-CoA esters and at low substrate concentrations medium and long-chain fatty-acyl-CoA esters are the primary substrates. Highest activity seen with medium-chain acyl-CoA esters and higher rates of activity seen with the unsaturated acyl-CoA esters compared with the saturated esters. Exhibits decapping activity towards dpCoA-capped RNAs in vitro. The polypeptide is Acyl-coenzyme A diphosphatase NUDT19 (NUDT19) (Homo sapiens (Human)).